The primary structure comprises 203 residues: Dephospho-CoA kinase (203 aa).

The DPCK domain maps to 3–202; the sequence is KIGLTGSIGM…MRIAKGDFRN (200 aa). ATP is bound at residue 11 to 16; the sequence is GMGKST.

Belongs to the CoaE family.

It is found in the cytoplasm. It carries out the reaction 3'-dephospho-CoA + ATP = ADP + CoA + H(+). It functions in the pathway cofactor biosynthesis; coenzyme A biosynthesis; CoA from (R)-pantothenate: step 5/5. Catalyzes the phosphorylation of the 3'-hydroxyl group of dephosphocoenzyme A to form coenzyme A. This Rhizobium etli (strain ATCC 51251 / DSM 11541 / JCM 21823 / NBRC 15573 / CFN 42) protein is Dephospho-CoA kinase.